The sequence spans 171 residues: Putative adenylate kinase (171 aa).

Residues Gly-9, Gly-11, Lys-12, Thr-13, and Thr-14 each contribute to the ATP site. An NMP region spans residues 28-51; the sequence is SLGELIRQKGFVLGRDPIRGYLEA. Residues 99–109 form an LID region; it reads GRGYPEGKVLE. Arg-100 contacts ATP.

The protein belongs to the adenylate kinase family. AK6 subfamily. In terms of assembly, interacts with uS11. Not a structural component of 40S pre-ribosomes, but transiently interacts with them by binding to uS11.

It carries out the reaction AMP + ATP = 2 ADP. It catalyses the reaction ATP + H2O = ADP + phosphate + H(+). Functionally, broad-specificity nucleoside monophosphate (NMP) kinase that catalyzes the reversible transfer of the terminal phosphate group between nucleoside triphosphates and monophosphates. Also has ATPase activity. Involved in the late maturation steps of the 30S ribosomal particles, specifically 16S rRNA maturation. While NMP activity is not required for ribosome maturation, ATPase activity is. Associates transiently with small ribosomal subunit protein uS11. ATP hydrolysis breaks the interaction with uS11. May temporarily remove uS11 from the ribosome to enable a conformational change of the ribosomal RNA that is needed for the final maturation step of the small ribosomal subunit. This is Putative adenylate kinase from Methanothermobacter thermautotrophicus (strain ATCC 29096 / DSM 1053 / JCM 10044 / NBRC 100330 / Delta H) (Methanobacterium thermoautotrophicum).